The primary structure comprises 132 residues: Large ribosomal subunit protein uL14 (132 aa).

It belongs to the universal ribosomal protein uL14 family. In terms of assembly, part of the 50S ribosomal subunit. Forms a cluster with proteins L3 and L24e, part of which may contact the 16S rRNA in 2 intersubunit bridges.

In terms of biological role, binds to 23S rRNA. Forms part of two intersubunit bridges in the 70S ribosome. The chain is Large ribosomal subunit protein uL14 from Methanosarcina barkeri (strain Fusaro / DSM 804).